A 495-amino-acid chain; its full sequence is uncharacterized protein (495 aa).

Helical transmembrane passes span 43 to 63, 75 to 95, 106 to 126, 128 to 148, 168 to 188, 196 to 216, 284 to 304, 323 to 343, 366 to 386, 390 to 410, 426 to 446, and 461 to 481; these read IIIS…MPSI, TLVV…PLIF, PLNI…ALSV, LAMF…GLGI, IYFL…GFIA, WEFW…VVFL, PIMI…YLLF, GLTY…LLPL, PMAF…GWTV, VFWF…VMTF, ASAM…FPLF, and SLLA…YMFG.

It belongs to the major facilitator superfamily. CAR1 family.

It localises to the membrane. This is an uncharacterized protein from Schizosaccharomyces pombe (strain 972 / ATCC 24843) (Fission yeast).